We begin with the raw amino-acid sequence, 421 residues long: Serine--tRNA ligase (421 aa).

232–234 provides a ligand contact to L-serine; sequence TAE. Residue 262–264 participates in ATP binding; that stretch reads RSE. An L-serine-binding site is contributed by Glu285. Residue 349–352 participates in ATP binding; that stretch reads EVSS. Ser384 is a binding site for L-serine.

The protein belongs to the class-II aminoacyl-tRNA synthetase family. Type-1 seryl-tRNA synthetase subfamily. As to quaternary structure, homodimer. The tRNA molecule binds across the dimer.

Its subcellular location is the cytoplasm. The enzyme catalyses tRNA(Ser) + L-serine + ATP = L-seryl-tRNA(Ser) + AMP + diphosphate + H(+). It catalyses the reaction tRNA(Sec) + L-serine + ATP = L-seryl-tRNA(Sec) + AMP + diphosphate + H(+). It functions in the pathway aminoacyl-tRNA biosynthesis; selenocysteinyl-tRNA(Sec) biosynthesis; L-seryl-tRNA(Sec) from L-serine and tRNA(Sec): step 1/1. In terms of biological role, catalyzes the attachment of serine to tRNA(Ser). Is also able to aminoacylate tRNA(Sec) with serine, to form the misacylated tRNA L-seryl-tRNA(Sec), which will be further converted into selenocysteinyl-tRNA(Sec). This chain is Serine--tRNA ligase, found in Mycoplasma mobile (strain ATCC 43663 / 163K / NCTC 11711) (Mesomycoplasma mobile).